The following is a 20-amino-acid chain: Antimicrobial peptide EP-20 (20 aa).

The disordered stretch occupies residues Glu1–Pro20.

It is found in the secreted. Functionally, the synthetic peptide inhibits growth of fungus P.capsici and partially that of V.dahliae, F.graminearum and F.omysporum. The protein is Antimicrobial peptide EP-20 of Xenorhabdus budapestensis.